A 226-amino-acid polypeptide reads, in one-letter code: UPF0758 protein SAK_1186 (226 aa).

One can recognise an MPN domain in the interval 103–225 (QILSSEQLAR…YYSFREEADI (123 aa)). Zn(2+) is bound by residues H174, H176, and D187. The JAMM motif motif lies at 174-187 (HNHPSGSPKPSESD).

Belongs to the UPF0758 family.

This Streptococcus agalactiae serotype Ia (strain ATCC 27591 / A909 / CDC SS700) protein is UPF0758 protein SAK_1186.